Here is a 384-residue protein sequence, read N- to C-terminus: Queuine tRNA-ribosyltransferase (384 aa).

Catalysis depends on aspartate 92, which acts as the Proton acceptor. Substrate-binding positions include 92-96, aspartate 146, glutamine 190, and glycine 217; that span reads DSGGF. The segment at 248–254 is RNA binding; the sequence is GVGRPED. Residue aspartate 267 is the Nucleophile of the active site. Residues 272-276 are RNA binding; important for wobble base 34 recognition; it reads TRHAR. Zn(2+)-binding residues include cysteine 305, cysteine 307, cysteine 310, and histidine 337.

It belongs to the queuine tRNA-ribosyltransferase family. In terms of assembly, homodimer. Within each dimer, one monomer is responsible for RNA recognition and catalysis, while the other monomer binds to the replacement base PreQ1. Zn(2+) serves as cofactor.

The catalysed reaction is 7-aminomethyl-7-carbaguanine + guanosine(34) in tRNA = 7-aminomethyl-7-carbaguanosine(34) in tRNA + guanine. It participates in tRNA modification; tRNA-queuosine biosynthesis. In terms of biological role, catalyzes the base-exchange of a guanine (G) residue with the queuine precursor 7-aminomethyl-7-deazaguanine (PreQ1) at position 34 (anticodon wobble position) in tRNAs with GU(N) anticodons (tRNA-Asp, -Asn, -His and -Tyr). Catalysis occurs through a double-displacement mechanism. The nucleophile active site attacks the C1' of nucleotide 34 to detach the guanine base from the RNA, forming a covalent enzyme-RNA intermediate. The proton acceptor active site deprotonates the incoming PreQ1, allowing a nucleophilic attack on the C1' of the ribose to form the product. After dissociation, two additional enzymatic reactions on the tRNA convert PreQ1 to queuine (Q), resulting in the hypermodified nucleoside queuosine (7-(((4,5-cis-dihydroxy-2-cyclopenten-1-yl)amino)methyl)-7-deazaguanosine). The protein is Queuine tRNA-ribosyltransferase of Xylella fastidiosa (strain 9a5c).